Consider the following 286-residue polypeptide: Glycine--tRNA ligase alpha subunit (286 aa).

This sequence belongs to the class-II aminoacyl-tRNA synthetase family. In terms of assembly, tetramer of two alpha and two beta subunits.

The protein localises to the cytoplasm. The enzyme catalyses tRNA(Gly) + glycine + ATP = glycyl-tRNA(Gly) + AMP + diphosphate. The protein is Glycine--tRNA ligase alpha subunit of Campylobacter lari (strain RM2100 / D67 / ATCC BAA-1060).